The following is a 904-amino-acid chain: Alanine--tRNA ligase (904 aa).

Residues His-584, His-588, Cys-687, and His-691 each contribute to the Zn(2+) site.

It belongs to the class-II aminoacyl-tRNA synthetase family. Zn(2+) is required as a cofactor.

It is found in the cytoplasm. The catalysed reaction is tRNA(Ala) + L-alanine + ATP = L-alanyl-tRNA(Ala) + AMP + diphosphate. Functionally, catalyzes the attachment of alanine to tRNA(Ala) in a two-step reaction: alanine is first activated by ATP to form Ala-AMP and then transferred to the acceptor end of tRNA(Ala). Also edits incorrectly charged Ser-tRNA(Ala) and Gly-tRNA(Ala) via its editing domain. This Mycobacterium bovis (strain ATCC BAA-935 / AF2122/97) protein is Alanine--tRNA ligase.